The chain runs to 113 residues: UPF0122 protein MCAP_0480 (113 aa).

Belongs to the UPF0122 family.

Might take part in the signal recognition particle (SRP) pathway. This is inferred from the conservation of its genetic proximity to ftsY/ffh. May be a regulatory protein. This is UPF0122 protein MCAP_0480 from Mycoplasma capricolum subsp. capricolum (strain California kid / ATCC 27343 / NCTC 10154).